Consider the following 681-residue polypeptide: Secretion system apparatus protein SsaV (681 aa).

7 helical membrane passes run 24–44 (MVLATVLLIAIVMMLLPLPTW), 48–68 (ILITINLMFSVILLLIAIYLS), 73–93 (LSVFPSLLLITTLYRLSLTIS), 118–138 (GNLTVGLVVFTIITIVQFIVI), 206–226 (TIAGIIVVLVNIIGGIIIAIV), 244–264 (IGDGLCGQIPSLLISLSAGII), and 295–315 (AVVLMLLALIPGFPFITLAFF).

The protein belongs to the FHIPEP (flagella/HR/invasion proteins export pore) family.

The protein resides in the cell inner membrane. Component of Salmonella pathogenicity island 2 (SPI-2) type III secretion system, required for secretion of some type III-secreted effectors including the SpvB exotoxin. This chain is Secretion system apparatus protein SsaV (ssaV), found in Salmonella typhimurium (strain 14028s / SGSC 2262).